The chain runs to 426 residues: 6-Hydroxy-7-prenyldeoxybrevianamide E synthase notC (426 aa).

A substrate-binding site is contributed by Glu94. Dimethylallyl diphosphate contacts are provided by Arg105, Lys191, and Tyr193. A substrate-binding site is contributed by Tyr195. Dimethylallyl diphosphate-binding residues include Lys267, Tyr269, Gln352, Tyr354, Tyr418, and Tyr422.

The protein belongs to the tryptophan dimethylallyltransferase family.

The enzyme catalyses 6-hydroxydeoxybrevianamide E + dimethylallyl diphosphate = notoamide S + diphosphate. The protein operates within alkaloid biosynthesis. Addition of 5 mM Mg(2+), Ca(2+) or Mn(2+) slightly enhances catalysis (about 100-120%). Significant reduction of enzyme activity (2%-35%) is observed with Cu(2+), Zn(2+), Fe(2+), or Sn(2+) (5 mM). Prenyltransferase; part of the gene cluster that mediates the biosynthesis of notoamide, a fungal indole alkaloid that belongs to a family of natural products containing a characteristic bicyclo[2.2.2]diazaoctane core. The first step of notoamide biosynthesis involves coupling of L-proline and L-tryptophan by the bimodular NRPS notE, to produce cyclo-L-tryptophan-L-proline called brevianamide F. The reverse prenyltransferase notF then acts as a deoxybrevianamide E synthase and converts brevianamide F to deoxybrevianamide E via reverse prenylation at C-2 of the indole ring leading to the bicyclo[2.2.2]diazaoctane core. Deoxybrevianamide E is further hydroxylated at C-6 of the indole ring, likely catalyzed by the cytochrome P450 monooxygenase notG, to yield 6-hydroxy-deoxybrevianamide E. 6-hydroxy-deoxybrevianamide E is a specific substrate of the prenyltransferase notC for normal prenylation at C-7 to produce 6-hydroxy-7-prenyl-deoxybrevianamide, also called notoamide S. As the proposed pivotal branching point in notoamide biosynthesis, notoamide S can be diverted to notoamide E through an oxidative pyran ring closure putatively catalyzed by either notH cytochrome P450 monooxygenase or the notD FAD-linked oxidoreductase. This step would be followed by an indole 2,3-epoxidation-initiated pinacol-like rearrangement catalyzed by the notB FAD-dependent monooxygenase leading to the formation of notoamide C and notoamide D. On the other hand notoamide S is converted to notoamide T by notH (or notD), a bifunctional oxidase that also functions as the intramolecular Diels-Alderase responsible for generation of (+)-notoamide T. To generate antipodal (-)-notoaminide T, notH' (or notD') in Aspergillus versicolor is expected to catalyze a Diels-Alder reaction leading to the opposite stereochemistry. The remaining oxidoreductase notD (or notH) likely catalyzes the oxidative pyran ring formation to yield (+)-stephacidin A. The FAD-dependent monooxygenase notI is highly similar to notB and is predicted to catalyze a similar conversion from (+)-stephacidin A to (-)-notoamide B via the 2,3-epoxidation of (+)-stephacidin A followed by a pinacol-type rearrangement. Finally, it remains unclear which enzyme could be responsible for the final hydroxylation steps leading to notoamide A and sclerotiamide. This chain is 6-Hydroxy-7-prenyldeoxybrevianamide E synthase notC, found in Aspergillus sp. (strain MF297-2).